The sequence spans 213 residues: Superoxide dismutase [Fe] (213 aa).

Positions 28, 82, 164, and 168 each coordinate Fe cation.

Belongs to the iron/manganese superoxide dismutase family. As to quaternary structure, homotetramer. The cofactor is Fe cation.

It catalyses the reaction 2 superoxide + 2 H(+) = H2O2 + O2. In terms of biological role, destroys superoxide anion radicals which are normally produced within the cells and which are toxic to biological systems. The protein is Superoxide dismutase [Fe] (sodB) of Aquifex aeolicus (strain VF5).